The primary structure comprises 277 residues: MSLCEDMLLCNYRKCRIKLSGYAWVTACSHIFCDQHGSGEFSRSPAICPACNSTLSGKLDIVRTELSPSEEYKAMVLAGLRPEIVLDISSRALAFWTYQVHQERLYQEYNFSKAEGHLKQMEKIYTQQIQSKDVELTSMKGEVTSMKKVLEEYKKKFSDISEKLMERNRQYQKLQGLYDSLRLRNITIANHEGTLEPSMIAQSGVLGFPLGNNSKFPLDNTPVRNRGDGDGDFQFRPFFAGSPTAPEPSNSFFSFVSPSRELEQQQVSSRAFKVKRI.

The segment at 4 to 51 adopts an RING-type; atypical zinc-finger fold; it reads CEDMLLCNYRKCRIKLSGYAWVTACSHIFCDQHGSGEFSRSPAICPAC. A coiled-coil region spans residues 127–182; that stretch reads QQIQSKDVELTSMKGEVTSMKKVLEEYKKKFSDISEKLMERNRQYQKLQGLYDSLR.

In terms of assembly, interacts with CCNB1, UBE2L3 and NF2. Ubiquitinated; autoubiquitinated. In terms of processing, phosphorylated by CDK1 on serine or threonine residues (in vitro). In terms of tissue distribution, highly expressed in heart. Detected at intermediate levels in liver and kidney, and at low levels in placenta, brain and lung.

The protein resides in the nucleus. It localises to the chromosome. It catalyses the reaction S-ubiquitinyl-[E2 ubiquitin-conjugating enzyme]-L-cysteine + [acceptor protein]-L-lysine = [E2 ubiquitin-conjugating enzyme]-L-cysteine + N(6)-ubiquitinyl-[acceptor protein]-L-lysine.. It participates in protein modification; protein ubiquitination. Ubiquitin E3 ligase that acts as a limiting factor for crossing-over during meiosis: required during zygonema to limit the colocalization of RNF212 with MutS-gamma-associated recombination sites and thereby establish early differentiation of crossover and non-crossover sites. Later, it is directed by MutL-gamma to stably accumulate at designated crossover sites. Probably promotes the dissociation of RNF212 and MutS-gamma to allow the progression of recombination and the implementation of the final steps of crossing over. Modulates cyclin-B levels and participates in the regulation of cell cycle progression through the G2 phase. Overexpression causes delayed entry into mitosis. The sequence is that of E3 ubiquitin-protein ligase CCNB1IP1 (CCNB1IP1) from Homo sapiens (Human).